Consider the following 485-residue polypeptide: tRNA-2-methylthio-N(6)-dimethylallyladenosine synthase (485 aa).

The MTTase N-terminal domain maps to 37-154; it reads GKLYIKTHGC…LPELIRARRE (118 aa). The [4Fe-4S] cluster site is built by Cys-46, Cys-83, Cys-117, Cys-191, Cys-195, and Cys-198. Residues 177–416 form the Radical SAM core domain; sequence RADGPSAFVS…HINAHAAGIS (240 aa). One can recognise a TRAM domain in the interval 417–480; it reads QRMVGSVQRV…SNSLRGRIQL (64 aa).

This sequence belongs to the methylthiotransferase family. MiaB subfamily. In terms of assembly, monomer. [4Fe-4S] cluster is required as a cofactor.

It localises to the cytoplasm. The enzyme catalyses N(6)-dimethylallyladenosine(37) in tRNA + (sulfur carrier)-SH + AH2 + 2 S-adenosyl-L-methionine = 2-methylsulfanyl-N(6)-dimethylallyladenosine(37) in tRNA + (sulfur carrier)-H + 5'-deoxyadenosine + L-methionine + A + S-adenosyl-L-homocysteine + 2 H(+). Its function is as follows. Catalyzes the methylthiolation of N6-(dimethylallyl)adenosine (i(6)A), leading to the formation of 2-methylthio-N6-(dimethylallyl)adenosine (ms(2)i(6)A) at position 37 in tRNAs that read codons beginning with uridine. The chain is tRNA-2-methylthio-N(6)-dimethylallyladenosine synthase from Xanthomonas campestris pv. campestris (strain 8004).